We begin with the raw amino-acid sequence, 111 residues long: Large ribosomal subunit protein eL42 (111 aa).

Residues Cys-12, Cys-15, Cys-72, and Cys-77 each coordinate Zn(2+).

The protein belongs to the eukaryotic ribosomal protein eL42 family. Component of the large ribosomal subunit.

It is found in the cytoplasm. Functionally, component of the large ribosomal subunit. The ribosome is a large ribonucleoprotein complex responsible for the synthesis of proteins in the cell. The protein is Large ribosomal subunit protein eL42 (RPL36A) of Oryctolagus cuniculus (Rabbit).